We begin with the raw amino-acid sequence, 379 residues long: Chaperone protein DnaJ 2 (379 aa).

Residues 4-68 (DYYAVLGVRR…QKKQVYDLGG (65 aa)) form the J domain. The segment at 130–212 (GTTKDIQVDT…CAGDGRVPSR (83 aa)) adopts a CR-type zinc-finger fold. Residues Cys143, Cys146, Cys160, Cys163, Cys186, Cys189, Cys200, and Cys203 each coordinate Zn(2+). CXXCXGXG motif repeat units follow at residues 143–150 (CNTCNGEG), 160–167 (CDMCRGRG), 186–193 (CPQCQGFA), and 200–207 (CPECAGDG). The tract at residues 351–379 (RGEERPTGQFQPGQQGLFSRLKDAFNGRS) is disordered. The span at 358 to 367 (GQFQPGQQGL) shows a compositional bias: polar residues. Positions 370-379 (RLKDAFNGRS) are enriched in basic and acidic residues.

It belongs to the DnaJ family. In terms of assembly, homodimer. It depends on Zn(2+) as a cofactor.

The protein resides in the cytoplasm. Its function is as follows. Participates actively in the response to hyperosmotic and heat shock by preventing the aggregation of stress-denatured proteins and by disaggregating proteins, also in an autonomous, DnaK-independent fashion. Unfolded proteins bind initially to DnaJ; upon interaction with the DnaJ-bound protein, DnaK hydrolyzes its bound ATP, resulting in the formation of a stable complex. GrpE releases ADP from DnaK; ATP binding to DnaK triggers the release of the substrate protein, thus completing the reaction cycle. Several rounds of ATP-dependent interactions between DnaJ, DnaK and GrpE are required for fully efficient folding. Also involved, together with DnaK and GrpE, in the DNA replication of plasmids through activation of initiation proteins. The sequence is that of Chaperone protein DnaJ 2 from Streptomyces albus G.